The sequence spans 30 residues: Cyclotide cter-G (30 aa).

The cyclopeptide (Gly-Asn) cross-link spans 1 to 30 (GLPCGESCVFIPCITTVVGCSCKNKVCYNN). 3 cysteine pairs are disulfide-bonded: C4/C20, C8/C22, and C13/C27.

Post-translationally, contains 3 disulfide bonds. This is a cyclic peptide.

Probably participates in a plant defense mechanism. The protein is Cyclotide cter-G of Clitoria ternatea (Butterfly pea).